A 668-amino-acid chain; its full sequence is Putative ankyrin repeat protein FPV244 (668 aa).

ANK repeat units follow at residues 40 to 69 (IPFT…KLIY), 144 to 173 (EYMK…DVNA), 177 to 206 (YCRT…DVNI), 210 to 239 (DDLS…NINK), 272 to 302 (YKNT…DVNA), 306 to 336 (KGET…DVNA), 340 to 370 (LYIT…NVNA), 374 to 403 (CDKT…DIEA), 407 to 437 (KIGT…NVNS), 441 to 471 (YLST…DVNA), 473 to 502 (NIRN…ELRD), and 571 to 602 (NMFY…EINT).

This chain is Putative ankyrin repeat protein FPV244, found in Vertebrata (FPV).